The following is a 448-amino-acid chain: Bifunctional protein GlmU (448 aa).

The segment at 1–232 (MSDRSLLVVV…ADEVAGVNSR (232 aa)) is pyrophosphorylase. UDP-N-acetyl-alpha-D-glucosamine-binding positions include 11 to 14 (LAAG), Lys-25, Gln-78, and 83 to 84 (GT). A Mg(2+)-binding site is contributed by Asp-108. UDP-N-acetyl-alpha-D-glucosamine contacts are provided by Gly-144, Glu-158, Asn-173, and Asn-230. Asn-230 lines the Mg(2+) pocket. The linker stretch occupies residues 233–253 (VQLAEAEAILQRRLRLAAMAG). The segment at 254-448 (GATLVAPETV…FRAARSKPKG (195 aa)) is N-acetyltransferase. 2 residues coordinate UDP-N-acetyl-alpha-D-glucosamine: Arg-319 and Lys-337. The active-site Proton acceptor is His-349. 2 residues coordinate UDP-N-acetyl-alpha-D-glucosamine: Tyr-352 and Asn-363. Acetyl-CoA is bound by residues Ala-366, 372 to 373 (NY), Thr-409, and Arg-426.

The protein in the N-terminal section; belongs to the N-acetylglucosamine-1-phosphate uridyltransferase family. This sequence in the C-terminal section; belongs to the transferase hexapeptide repeat family. As to quaternary structure, homotrimer. Requires Mg(2+) as cofactor.

The protein resides in the cytoplasm. It catalyses the reaction alpha-D-glucosamine 1-phosphate + acetyl-CoA = N-acetyl-alpha-D-glucosamine 1-phosphate + CoA + H(+). The catalysed reaction is N-acetyl-alpha-D-glucosamine 1-phosphate + UTP + H(+) = UDP-N-acetyl-alpha-D-glucosamine + diphosphate. The protein operates within nucleotide-sugar biosynthesis; UDP-N-acetyl-alpha-D-glucosamine biosynthesis; N-acetyl-alpha-D-glucosamine 1-phosphate from alpha-D-glucosamine 6-phosphate (route II): step 2/2. It functions in the pathway nucleotide-sugar biosynthesis; UDP-N-acetyl-alpha-D-glucosamine biosynthesis; UDP-N-acetyl-alpha-D-glucosamine from N-acetyl-alpha-D-glucosamine 1-phosphate: step 1/1. It participates in bacterial outer membrane biogenesis; LPS lipid A biosynthesis. Catalyzes the last two sequential reactions in the de novo biosynthetic pathway for UDP-N-acetylglucosamine (UDP-GlcNAc). The C-terminal domain catalyzes the transfer of acetyl group from acetyl coenzyme A to glucosamine-1-phosphate (GlcN-1-P) to produce N-acetylglucosamine-1-phosphate (GlcNAc-1-P), which is converted into UDP-GlcNAc by the transfer of uridine 5-monophosphate (from uridine 5-triphosphate), a reaction catalyzed by the N-terminal domain. This chain is Bifunctional protein GlmU, found in Xanthobacter autotrophicus (strain ATCC BAA-1158 / Py2).